A 525-amino-acid polypeptide reads, in one-letter code: AP-4 complex accessory subunit Tepsin (525 aa).

The 134-residue stretch at 8 to 141 (RDRLSFLHRL…FSDTVLPLAP (134 aa)) folds into the ENTH domain. Positions 139–229 (LAPSQPLGTP…SHSGASREPG (91 aa)) are disordered. Low complexity predominate over residues 193 to 225 (SGPSSQNSSQNSDLSRVSDSGSHSGSDSHSGAS). A phosphoserine mark is found at Ser333 and Ser356. The segment at 355–465 (LSPARGTSAE…PKRGPSSCAW (111 aa)) is disordered. Over residues 393 to 412 (PLSSTPVSSRSPAPSSGMPS) the composition is skewed to low complexity. Positions 413–429 (SPVPTPPPDASPIPAPG) are enriched in pro residues. Residues 434 to 448 (AEARLAESRRWRPER) are compositionally biased toward basic and acidic residues. Residues 467-477 (RDSLFAGMELV) form an interaction with AP4B1 region. A disordered region spans residues 487–525 (AAAGESCPDAPRAPQTSSQRTAAKEPPGSEPSAFAFLNA). Positions 515–525 (SEPSAFAFLNA) are interaction with AP4E1.

Interacts with AP4B1 and AP4E1; the interaction is direct and mediates the association of TEPSIN with the adapter-like complex 4 (AP-4), a heterotetramer composed of AP4B1, AP4E1, AP4M1 and AP4S1.

It is found in the golgi apparatus. It localises to the trans-Golgi network membrane. Its subcellular location is the cytoplasmic vesicle. The protein resides in the cytoplasm. The protein localises to the cytosol. Associates with the adapter-like complex 4 (AP-4) and may therefore play a role in vesicular trafficking of proteins at the trans-Golgi network. The protein is AP-4 complex accessory subunit Tepsin of Homo sapiens (Human).